The following is a 221-amino-acid chain: Protein myomaker (221 aa).

The Extracellular portion of the chain corresponds to 1–3; that stretch reads MGT. The chain crosses the membrane as a helical span at residues 4–24; the sequence is VVAKLLLPTLSSLAFLPTVSI. The Cytoplasmic segment spans residues 25–29; sequence ATKRR. The chain crosses the membrane as a helical span at residues 30–50; it reads FYMEAMVYLFTMFFVAFSHAC. Over 51 to 64 the chain is Extracellular; sequence DGPGLSVLCFMRRD. A helical membrane pass occupies residues 65–85; sequence ILEYFSIYGTALSMWVSLMAL. Residues 86–93 lie on the Cytoplasmic side of the membrane; that stretch reads ADFDEPQR. A helical membrane pass occupies residues 94–110; sequence STFTMLGVLTIAVRTFH. The Extracellular segment spans residues 111 to 113; that stretch reads DRW. A helical transmembrane segment spans residues 114 to 134; sequence GYGVYSGPIGTATLIIAVKWL. The Cytoplasmic segment spans residues 135–153; sequence KKMKEKKGLYPDKSIYTQQ. Residues 154-174 traverse the membrane as a helical segment; that stretch reads IGPGLCFGALALMLRFFFEEW. Asp175 is a topological domain (extracellular). Residues 176 to 196 form a helical membrane-spanning segment; it reads YTYVHSFYHCALAMSFVLLLP. The Cytoplasmic portion of the chain corresponds to 197-221; it reads KVNKKAGNAGAPAKLTFSTLCCTCV. S-palmitoyl cysteine attachment occurs at residues Cys217 and Cys218.

The protein belongs to the TMEM8 family. As to quaternary structure, interacts with MYMX. Post-translationally, palmitoylated at the C-terminus; palmitoylation promotes localization to the Golgi apparatus. As to expression, specifically expressed in skeletal muscle during embryogenesis and adult muscle regeneration.

Its subcellular location is the cell membrane. It localises to the golgi apparatus membrane. Functionally, myoblast-specific protein that mediates myoblast fusion, an essential step for the formation of multi-nucleated muscle fibers. Actively participates in the membrane fusion reaction by mediating the mixing of cell membrane lipids (hemifusion) upstream of MYMX. Acts independently of MYMX. Involved in skeletal muscle regeneration in response to injury by mediating the fusion of satellite cells, a population of muscle stem cells, with injured myofibers. Also involved in skeletal muscle hypertrophy, probably by mediating the fusion of satellite cells with myofibers. The polypeptide is Protein myomaker (Mus musculus (Mouse)).